The chain runs to 197 residues: Xanthine phosphoribosyltransferase (197 aa).

Residues Leu20 and Asn27 each coordinate xanthine. 128–132 (ANGQA) provides a ligand contact to 5-phospho-alpha-D-ribose 1-diphosphate. Lys156 is a binding site for xanthine.

Belongs to the purine/pyrimidine phosphoribosyltransferase family. Xpt subfamily. Homodimer.

The protein resides in the cytoplasm. The catalysed reaction is XMP + diphosphate = xanthine + 5-phospho-alpha-D-ribose 1-diphosphate. It participates in purine metabolism; XMP biosynthesis via salvage pathway; XMP from xanthine: step 1/1. Converts the preformed base xanthine, a product of nucleic acid breakdown, to xanthosine 5'-monophosphate (XMP), so it can be reused for RNA or DNA synthesis. The chain is Xanthine phosphoribosyltransferase from Bacillus cereus (strain ZK / E33L).